The sequence spans 210 residues: Small ribosomal subunit protein uS3 (210 aa).

Residues 38–106 (LRSFLKKRLY…EVYLNIQEVR (69 aa)) enclose the KH type-2 domain.

Belongs to the universal ribosomal protein uS3 family. In terms of assembly, part of the 30S ribosomal subunit. Forms a tight complex with proteins S10 and S14.

In terms of biological role, binds the lower part of the 30S subunit head. Binds mRNA in the 70S ribosome, positioning it for translation. The polypeptide is Small ribosomal subunit protein uS3 (Geotalea uraniireducens (strain Rf4) (Geobacter uraniireducens)).